The sequence spans 402 residues: Phosphopentomutase (402 aa).

Asp10, Asp301, His306, Asp342, His343, and His354 together coordinate Mn(2+).

It belongs to the phosphopentomutase family. Mn(2+) serves as cofactor.

It is found in the cytoplasm. It carries out the reaction 2-deoxy-alpha-D-ribose 1-phosphate = 2-deoxy-D-ribose 5-phosphate. The enzyme catalyses alpha-D-ribose 1-phosphate = D-ribose 5-phosphate. It participates in carbohydrate degradation; 2-deoxy-D-ribose 1-phosphate degradation; D-glyceraldehyde 3-phosphate and acetaldehyde from 2-deoxy-alpha-D-ribose 1-phosphate: step 1/2. Isomerase that catalyzes the conversion of deoxy-ribose 1-phosphate (dRib-1-P) and ribose 1-phosphate (Rib-1-P) to deoxy-ribose 5-phosphate (dRib-5-P) and ribose 5-phosphate (Rib-5-P), respectively. This Aeromonas salmonicida (strain A449) protein is Phosphopentomutase.